A 448-amino-acid chain; its full sequence is Exodeoxyribonuclease 7 large subunit (448 aa).

The protein belongs to the XseA family. Heterooligomer composed of large and small subunits.

The protein localises to the cytoplasm. It catalyses the reaction Exonucleolytic cleavage in either 5'- to 3'- or 3'- to 5'-direction to yield nucleoside 5'-phosphates.. Bidirectionally degrades single-stranded DNA into large acid-insoluble oligonucleotides, which are then degraded further into small acid-soluble oligonucleotides. The protein is Exodeoxyribonuclease 7 large subunit of Exiguobacterium sp. (strain ATCC BAA-1283 / AT1b).